Reading from the N-terminus, the 141-residue chain is Large ribosomal subunit protein uL16 (141 aa).

Residues 1-19 (MLMPKKTKYRKQQKGRNRG) are compositionally biased toward basic residues. The tract at residues 1-22 (MLMPKKTKYRKQQKGRNRGKAY) is disordered.

This sequence belongs to the universal ribosomal protein uL16 family. Part of the 50S ribosomal subunit.

Its function is as follows. Binds 23S rRNA and is also seen to make contacts with the A and possibly P site tRNAs. In Nitratiruptor sp. (strain SB155-2), this protein is Large ribosomal subunit protein uL16.